Consider the following 135-residue polypeptide: Small ribosomal subunit protein uS8 (135 aa).

It belongs to the universal ribosomal protein uS8 family. As to quaternary structure, part of the 30S ribosomal subunit. Contacts proteins S5 and S12.

Its function is as follows. One of the primary rRNA binding proteins, it binds directly to 16S rRNA central domain where it helps coordinate assembly of the platform of the 30S subunit. This is Small ribosomal subunit protein uS8 from Salinispora arenicola (strain CNS-205).